The primary structure comprises 671 residues: Acetyl-coenzyme A synthetase 2 (671 aa).

Residues 207 to 210 (RGGR) and T326 each bind CoA. Residues 402-404 (GEP), 426-431 (DTYWQT), D517, and R532 each bind ATP. S540 serves as a coordination point for CoA. R543 lines the ATP pocket. Residue R603 participates in CoA binding.

It belongs to the ATP-dependent AMP-binding enzyme family.

The catalysed reaction is acetate + ATP + CoA = acetyl-CoA + AMP + diphosphate. The chain is Acetyl-coenzyme A synthetase 2 (ACS2) from Candida albicans (strain SC5314 / ATCC MYA-2876) (Yeast).